The chain runs to 456 residues: MDFEQISCSLLPLLGGKENIASAAHCATRLRLVLVDDSLADQQAIGKVEGVKGCFRNAGQMQIIFGTGVVNKVYAAFTQAAGISESSKSEAADIAAKKLNPFQRIARLLSNIFVPIIPAIVASGLLMGLLGMVKTYGWVDPGNAIYIMLDMCSSAAFIILPILIGFTAAREFGGNPYLGATLGGILTHPALTNAWGVAAGFHTMNFFGFEIAMIGYQGTVFPVLLAVWFMSIVEKQLRRAIPDALDLILTPFLTVIISGFIALLIIGPAGRALGDGISFVLSTLISHAGWLAGLLFGGLYSVIVITGIHHSFHAVEAGLLGNPSIGVNFLLPIWAMANVAQGGACLAVWFKTKDAKIKAITLPSAFSAMLGITEAAIFGINLRFVKPFIAALIGGAAGGAWVVSVHVYMTAVGLTAIPGMAIVQASSLLNYIIGMVIAFGVAFTVSLVLKYKTDAE.

Residues 4–87 enclose the PTS EIIB type-1 domain; sequence EQISCSLLPL…TQAAGISESS (84 aa). The active-site Phosphocysteine intermediate; for EIIB activity is the cysteine 26. The region spanning 107–456 is the PTS EIIC type-1 domain; that stretch reads RLLSNIFVPI…LVLKYKTDAE (350 aa). The next 10 membrane-spanning stretches (helical) occupy residues 112 to 132, 144 to 164, 181 to 201, 213 to 233, 247 to 267, 288 to 308, 329 to 349, 360 to 380, 388 to 408, and 428 to 448; these read IFVP…LLGM, AIYI…PILI, TLGG…AAGF, MIGY…MSIV, LILT…LIIG, AGWL…ITGI, FLLP…LAVW, ITLP…IFGI, FIAA…VHVY, and LLNY…VSLV.

The protein localises to the cell inner membrane. The enzyme catalyses N(pros)-phospho-L-histidyl-[protein](out) + sucrose = sucrose 6(G)-phosphate(in) + L-histidyl-[protein]. Its function is as follows. The phosphoenolpyruvate-dependent sugar phosphotransferase system (sugar PTS), a major carbohydrate active transport system, catalyzes the phosphorylation of incoming sugar substrates concomitantly with their translocation across the cell membrane. This system is involved in sucrose transport. The chain is PTS system sucrose-specific EIIBC component from Salmonella typhimurium.